The sequence spans 101 residues: Large ribosomal subunit protein bL27 (101 aa).

The tract at residues 1 to 21 is disordered; the sequence is MAHKKAGGSSRNGRDSRSKRL.

It belongs to the bacterial ribosomal protein bL27 family.

This is Large ribosomal subunit protein bL27 from Buchnera aphidicola subsp. Cinara cedri (strain Cc).